The chain runs to 465 residues: Fumarate hydratase class II (465 aa).

Substrate contacts are provided by residues Ser-99–Thr-101, Arg-127, His-130–Asp-133, Ser-140–Asn-142, and Thr-188. His-189 serves as the catalytic Proton donor/acceptor. The active site involves Ser-319. Residues Ser-320 and Lys-325–Asn-327 each bind substrate.

This sequence belongs to the class-II fumarase/aspartase family. Fumarase subfamily. Homotetramer.

Its subcellular location is the cytoplasm. It catalyses the reaction (S)-malate = fumarate + H2O. Its pathway is carbohydrate metabolism; tricarboxylic acid cycle; (S)-malate from fumarate: step 1/1. Involved in the TCA cycle. Catalyzes the stereospecific interconversion of fumarate to L-malate. This Parasynechococcus marenigrum (strain WH8102) protein is Fumarate hydratase class II.